The sequence spans 66 residues: Large ribosomal subunit protein uL29 (66 aa).

It belongs to the universal ribosomal protein uL29 family.

This is Large ribosomal subunit protein uL29 from Bacillus licheniformis (strain ATCC 14580 / DSM 13 / JCM 2505 / CCUG 7422 / NBRC 12200 / NCIMB 9375 / NCTC 10341 / NRRL NRS-1264 / Gibson 46).